Consider the following 174-residue polypeptide: MIDGDGYRPNVGIVICNSHGQVFWARRYGQHSWQFPQGGIDEGETPEQAMYRELYEEVGLTKKDVRILASSRHWLRYKLPKRLVRWDSKPVCIGQKQKWFLLSLECDESRVNMQRGSTPEFDGWRWVSYWYPVRQVVSFKRDVYRRALKEFAAIAMPFKERKERKLKRYKSKRG.

A Nudix hydrolase domain is found at 6–149 (GYRPNVGIVI…KRDVYRRALK (144 aa)). The Nudix box signature appears at 38–59 (GGIDEGETPEQAMYRELYEEVG).

This sequence belongs to the Nudix hydrolase family. RppH subfamily. A divalent metal cation serves as cofactor.

Its function is as follows. Accelerates the degradation of transcripts by removing pyrophosphate from the 5'-end of triphosphorylated RNA, leading to a more labile monophosphorylated state that can stimulate subsequent ribonuclease cleavage. In Photobacterium profundum (strain SS9), this protein is RNA pyrophosphohydrolase.